Here is a 1141-residue protein sequence, read N- to C-terminus: Eukaryotic translation initiation factor 3 subunit A (1141 aa).

The region spanning 319–501 (LQRMAAHVLL…NSIYFGTDLT (183 aa)) is the PCI domain. 2 stretches are compositionally biased toward basic and acidic residues: residues 588–623 (QNNA…EERE) and 829–899 (AAEE…RGGD). Disordered regions lie at residues 588–631 (QNNA…QNEI) and 829–1141 (AAEE…VKRR). Phosphoserine is present on Ser908. Basic and acidic residues-rich tracts occupy residues 920-976 (ERND…EPDT), 990-1051 (SRDD…EPQR), 1059-1087 (DAPR…RGDQ), and 1110-1131 (TREE…KAGD).

Belongs to the eIF-3 subunit A family. As to quaternary structure, component of the eukaryotic translation initiation factor 3 (eIF-3) complex. The eIF-3 complex interacts with pix.

The protein localises to the cytoplasm. RNA-binding component of the eukaryotic translation initiation factor 3 (eIF-3) complex, which is involved in protein synthesis of a specialized repertoire of mRNAs and, together with other initiation factors, stimulates binding of mRNA and methionyl-tRNAi to the 40S ribosome. The eIF-3 complex specifically targets and initiates translation of a subset of mRNAs involved in cell proliferation. This Drosophila simulans (Fruit fly) protein is Eukaryotic translation initiation factor 3 subunit A.